The following is a 396-amino-acid chain: Tryptophan synthase beta chain (396 aa).

Lysine 86 bears the N6-(pyridoxal phosphate)lysine mark.

It belongs to the TrpB family. Tetramer of two alpha and two beta chains. Pyridoxal 5'-phosphate is required as a cofactor.

The catalysed reaction is (1S,2R)-1-C-(indol-3-yl)glycerol 3-phosphate + L-serine = D-glyceraldehyde 3-phosphate + L-tryptophan + H2O. Its pathway is amino-acid biosynthesis; L-tryptophan biosynthesis; L-tryptophan from chorismate: step 5/5. In terms of biological role, the beta subunit is responsible for the synthesis of L-tryptophan from indole and L-serine. The protein is Tryptophan synthase beta chain of Francisella philomiragia subsp. philomiragia (strain ATCC 25017 / CCUG 19701 / FSC 153 / O#319-036).